The chain runs to 597 residues: Exochitinase 1 (597 aa).

Positions 1–29 form a signal peptide, or 32; the sequence is MDRFRPLAVLIAAALTLSGTTALSSAARA. The region spanning 172–253 is the Fibronectin type-III domain; that stretch reads PPTGLRTGSV…ATVTATTAPG (82 aa). Positions 264 to 597 constitute a GH18 domain; that stretch reads HALVGYLHAS…FQRTFDGYFG (334 aa). Catalysis depends on Glu-384, which acts as the Proton donor.

Belongs to the glycosyl hydrolase 18 family. Chitinase class II subfamily. Post-translationally, the N-terminus is blocked.

It catalyses the reaction Random endo-hydrolysis of N-acetyl-beta-D-glucosaminide (1-&gt;4)-beta-linkages in chitin and chitodextrins.. Its activity is regulated as follows. Inhibited by the pseudosugar allosamidin A. Functionally, exochitinase that generates exclusively chitobiose from chitotetraose, chitohexaose, and colloidal high-molecular mass chitin. In Streptomyces olivaceoviridis (Streptomyces corchorusii), this protein is Exochitinase 1 (chi01).